The chain runs to 50 residues: Protein PsbN (50 aa).

The helical transmembrane segment at Ile-14 to Phe-34 threads the bilayer.

It belongs to the PsbN family.

It localises to the cellular thylakoid membrane. Its function is as follows. May play a role in photosystem I and II biogenesis. This is Protein PsbN from Prochlorococcus marinus (strain MIT 9215).